A 156-amino-acid chain; its full sequence is Phytohormone-binding protein (156 aa).

Gibberellin A3 is bound by residues glutamine 22, glutamine 68, and threonine 141.

The protein belongs to the BetVI family.

Its function is as follows. Binds gibberellin A3 (GA3) in vitro. The polypeptide is Phytohormone-binding protein (Medicago truncatula (Barrel medic)).